A 104-amino-acid chain; its full sequence is Thioredoxin 1 (104 aa).

The Thioredoxin domain occupies 2-104; sequence VKIVTSQAEF…LKQLIEKYAA (103 aa). Residues C30 and C33 each act as nucleophile in the active site. C30 and C33 form a disulfide bridge.

Belongs to the thioredoxin family. The disulfide bond between Cys-30 and Cys-33 acts as a redox-active center and is reduced by thioredoxin reductase TRXR.

It is found in the cytoplasm. Participates in various redox reactions through the reversible oxidation of its active center dithiol to a disulfide and catalyzes dithiol-disulfide exchange reactions. By modifying the redox status of targeted proteins, induces changes in their structure and activity. Reduces oxidized glutathione (GSSG), thereby acting as a backup for the glutathione redox system. Reduces nitroglutathione (GSNO), a compound involved in the transport of nitric oxide (NO). Also reduces oxidative stress by detoxifying hydrogen peroxide, tert-butyl hydroperoxide and cumene hydroperoxide. Activates ornithine aminotransferase OAT by reducing a disulfide bond in the substrate binding loop, thereby enhancing the affinity of OAT for its substrates. May reduce S-adenosyl-L-homocysteine hydrolase SAHH. In Plasmodium falciparum (isolate 3D7), this protein is Thioredoxin 1.